A 101-amino-acid chain; its full sequence is NADH-quinone oxidoreductase subunit K (101 aa).

3 consecutive transmembrane segments (helical) span residues 4 to 24 (LTHY…GIFL), 30 to 50 (IVLL…FIAF), and 61 to 81 (IFVF…LAIL).

This sequence belongs to the complex I subunit 4L family. In terms of assembly, NDH-1 is composed of 14 different subunits. Subunits NuoA, H, J, K, L, M, N constitute the membrane sector of the complex.

It localises to the cell inner membrane. It carries out the reaction a quinone + NADH + 5 H(+)(in) = a quinol + NAD(+) + 4 H(+)(out). Its function is as follows. NDH-1 shuttles electrons from NADH, via FMN and iron-sulfur (Fe-S) centers, to quinones in the respiratory chain. The immediate electron acceptor for the enzyme in this species is believed to be ubiquinone. Couples the redox reaction to proton translocation (for every two electrons transferred, four hydrogen ions are translocated across the cytoplasmic membrane), and thus conserves the redox energy in a proton gradient. The protein is NADH-quinone oxidoreductase subunit K of Laribacter hongkongensis (strain HLHK9).